An 84-amino-acid chain; its full sequence is UPF0473 protein CPF_2030 (84 aa).

It belongs to the UPF0473 family.

The sequence is that of UPF0473 protein CPF_2030 from Clostridium perfringens (strain ATCC 13124 / DSM 756 / JCM 1290 / NCIMB 6125 / NCTC 8237 / Type A).